We begin with the raw amino-acid sequence, 320 residues long: o-succinylbenzoate synthase (320 aa).

The active-site Proton donor is the Lys-133. Residues Asp-161, Glu-190, and Asp-213 each coordinate Mg(2+). The active-site Proton acceptor is the Lys-235.

Belongs to the mandelate racemase/muconate lactonizing enzyme family. MenC type 1 subfamily. It depends on a divalent metal cation as a cofactor.

It carries out the reaction (1R,6R)-6-hydroxy-2-succinyl-cyclohexa-2,4-diene-1-carboxylate = 2-succinylbenzoate + H2O. Its pathway is quinol/quinone metabolism; 1,4-dihydroxy-2-naphthoate biosynthesis; 1,4-dihydroxy-2-naphthoate from chorismate: step 4/7. The protein operates within quinol/quinone metabolism; menaquinone biosynthesis. In terms of biological role, converts 2-succinyl-6-hydroxy-2,4-cyclohexadiene-1-carboxylate (SHCHC) to 2-succinylbenzoate (OSB). The polypeptide is o-succinylbenzoate synthase (Escherichia coli O9:H4 (strain HS)).